Reading from the N-terminus, the 515-residue chain is Cytoplasmic tRNA 2-thiolation protein 2 (515 aa).

Disordered stretches follow at residues 1-24 (MCQV…RPSR) and 188-217 (LGAG…ARPP). Cys2 is modified (N-acetylcysteine). Phosphoserine occurs at positions 415, 419, 435, and 508.

This sequence belongs to the CTU2/NCS2 family. Component of a complex at least composed of URM1, CTU2/NCS2 and CTU1/ATPBD3.

It is found in the cytoplasm. It participates in tRNA modification; 5-methoxycarbonylmethyl-2-thiouridine-tRNA biosynthesis. Plays a central role in 2-thiolation of mcm(5)S(2)U at tRNA wobble positions of tRNA(Lys), tRNA(Glu) and tRNA(Gln). May act by forming a heterodimer with CTU1/ATPBD3 that ligates sulfur from thiocarboxylated URM1 onto the uridine of tRNAs at wobble position. The sequence is that of Cytoplasmic tRNA 2-thiolation protein 2 from Homo sapiens (Human).